The following is a 228-amino-acid chain: Aquaporin Z 2 (228 aa).

2 consecutive transmembrane segments (helical) span residues 9 to 29 and 34 to 54; these read FFGTFWLVFGGCGSAVFAAAF and IGFTGVALAFGLTVLTMAYAV. The short motif at 63–65 is the NPA 1 element; the sequence is NPA. A run of 3 helical transmembrane segments spans residues 82 to 102, 129 to 149, and 158 to 178; these read VPYVIAQVAGAIVAAAALYVI, LVSALLIEIILTAFFLIVILG, and GFAPIAIGLALTLIHLISIPV. The short motif at 184-186 is the NPA 2 element; it reads NPA. Residues 204–224 traverse the membrane as a helical segment; sequence WLFWLAPIVGGAAGAVIWKLF.

This sequence belongs to the MIP/aquaporin (TC 1.A.8) family. As to quaternary structure, homotetramer.

The protein localises to the cell inner membrane. The catalysed reaction is H2O(in) = H2O(out). Functionally, channel that permits osmotically driven movement of water in both directions. It is involved in the osmoregulation and in the maintenance of cell turgor during volume expansion in rapidly growing cells. It mediates rapid entry or exit of water in response to abrupt changes in osmolarity. The sequence is that of Aquaporin Z 2 from Agrobacterium fabrum (strain C58 / ATCC 33970) (Agrobacterium tumefaciens (strain C58)).